We begin with the raw amino-acid sequence, 519 residues long: Transketolase, chloroplastic (519 aa).

Asp-11 contributes to the Mg(2+) binding site. Thiamine diphosphate-binding residues include Gly-12 and Asn-41. Positions 41 and 43 each coordinate Mg(2+). A thiamine diphosphate-binding site is contributed by His-118. Residues His-118, Arg-212, and Ser-239 each coordinate substrate. The thiamine diphosphate site is built by Glu-266 and Phe-293. Glu-266 (proton donor) is an active-site residue. His-317, Asp-325, and Arg-376 together coordinate substrate.

The protein belongs to the transketolase family. As to quaternary structure, homodimer. The cofactor is Mg(2+). Ca(2+) serves as cofactor. It depends on Mn(2+) as a cofactor. Co(2+) is required as a cofactor. Requires thiamine diphosphate as cofactor. In terms of tissue distribution, constitutively expressed in leaves and roots.

Its subcellular location is the plastid. It localises to the chloroplast. It catalyses the reaction D-sedoheptulose 7-phosphate + D-glyceraldehyde 3-phosphate = aldehydo-D-ribose 5-phosphate + D-xylulose 5-phosphate. Functionally, catalyzes the transfer of a two-carbon ketol group from a ketose donor to an aldose acceptor, via a covalent intermediate with the cofactor thiamine pyrophosphate. The sequence is that of Transketolase, chloroplastic (TKT3) from Craterostigma plantagineum (Blue gem).